A 591-amino-acid polypeptide reads, in one-letter code: Putative F-box protein At1g32140 (591 aa).

In terms of domain architecture, F-box spans T2–R49. Residues A567–K581 show a composition bias toward basic residues. A disordered region spans residues A567–V591.

The sequence is that of Putative F-box protein At1g32140 from Arabidopsis thaliana (Mouse-ear cress).